Here is a 162-residue protein sequence, read N- to C-terminus: Peptide deformylase-like (162 aa).

Belongs to the polypeptide deformylase family.

The sequence is that of Peptide deformylase-like from Staphylococcus aureus (strain MRSA252).